The following is a 645-amino-acid chain: 1,4-alpha-glucan branching enzyme GlgB (645 aa).

The Nucleophile role is filled by Asp-309. Glu-352 serves as the catalytic Proton donor. Residues 619–645 (VKTRKGSKKQDGSKTKVRSNVTSRGKR) form a disordered region. Residues 636–645 (RSNVTSRGKR) show a composition bias toward polar residues.

This sequence belongs to the glycosyl hydrolase 13 family. GlgB subfamily. Monomer.

It catalyses the reaction Transfers a segment of a (1-&gt;4)-alpha-D-glucan chain to a primary hydroxy group in a similar glucan chain.. It participates in glycan biosynthesis; glycogen biosynthesis. Functionally, catalyzes the formation of the alpha-1,6-glucosidic linkages in glycogen by scission of a 1,4-alpha-linked oligosaccharide from growing alpha-1,4-glucan chains and the subsequent attachment of the oligosaccharide to the alpha-1,6 position. In Bacillus cereus (strain 03BB102), this protein is 1,4-alpha-glucan branching enzyme GlgB.